Reading from the N-terminus, the 181-residue chain is Large ribosomal subunit protein uL5 (181 aa).

This sequence belongs to the universal ribosomal protein uL5 family. As to quaternary structure, part of the 50S ribosomal subunit; part of the 5S rRNA/L5/L18/L25 subcomplex. Contacts the 5S rRNA and the P site tRNA. Forms a bridge to the 30S subunit in the 70S ribosome.

Functionally, this is one of the proteins that bind and probably mediate the attachment of the 5S RNA into the large ribosomal subunit, where it forms part of the central protuberance. In the 70S ribosome it contacts protein S13 of the 30S subunit (bridge B1b), connecting the 2 subunits; this bridge is implicated in subunit movement. Contacts the P site tRNA; the 5S rRNA and some of its associated proteins might help stabilize positioning of ribosome-bound tRNAs. This Helicobacter pylori (strain G27) protein is Large ribosomal subunit protein uL5.